We begin with the raw amino-acid sequence, 63 residues long: Large ribosomal subunit protein uL29 (63 aa).

It belongs to the universal ribosomal protein uL29 family.

This Mannheimia succiniciproducens (strain KCTC 0769BP / MBEL55E) protein is Large ribosomal subunit protein uL29.